A 748-amino-acid chain; its full sequence is Phytochrome-like protein Cph1 (748 aa).

In terms of domain architecture, PAS spans 19-86 (AIHTAHLIQP…IQSRLTAGQI (68 aa)). The tract at residues 87 to 510 (SSLNPSKLWA…KKAIVNLILR (424 aa)) is chromophore binding domain. The GAF domain occupies 152-320 (NLRDFYDVIV…VVFSNISAQE (169 aa)). Cysteine 259 contacts a tetrapyrrole. The Histidine kinase domain maps to 535 to 748 (IASHDLQEPL…TFYFSIPIGN (214 aa)). At histidine 538 the chain carries Phosphohistidine; by autocatalysis.

The protein in the N-terminal section; belongs to the phytochrome family. As to quaternary structure, homodimer. In terms of processing, contains one covalently linked tetrapyrrole chromophore.

It catalyses the reaction ATP + protein L-histidine = ADP + protein N-phospho-L-histidine.. Functionally, regulatory photoreceptor which exists in two forms that are reversibly interconvertible by light: the R form that absorbs maximally in the red region of the spectrum and the FR form that absorbs maximally in the far-red region. Also has a slight blue shift for the far-red maximum. Forms a two-component system with the Rrcp1 response regulator. The polypeptide is Phytochrome-like protein Cph1 (cph1) (Synechocystis sp. (strain ATCC 27184 / PCC 6803 / Kazusa)).